We begin with the raw amino-acid sequence, 93 residues long: MRTVPLFAACLLLTLMAQAEPLPRAADHSDTKMKGDREDHVAVISFWEEESTSLQDAGAGAGRRCICTTRTCRFPYRRLGTCLFQNRVYTFCC.

Residues 1–19 (MRTVPLFAACLLLTLMAQA) form the signal peptide. A propeptide spanning residues 20–62 (EPLPRAADHSDTKMKGDREDHVAVISFWEEESTSLQDAGAGAG) is cleaved from the precursor. Intrachain disulfides connect C65/C93, C67/C82, and C72/C92.

It belongs to the alpha-defensin family.

It localises to the secreted. Its function is as follows. Has antibiotic, anti-fungi and antiviral activity. This is Neutrophil cationic peptide 2 from Cavia porcellus (Guinea pig).